A 182-amino-acid chain; its full sequence is METTAFNTTSRIGNWSSAISPPLQTCGSFKCQLPTRRGVIVADLRNSNFRWRKATTTSRGNVAAEAVKIPTSVPVRVARELAQAGYRYLDVRTPDEFSIGHPTRAINVPYMYRVGSGMVKNPSFLRQVSSHFRKHDEIIIGCESGQMSFMASTDLLTAGFTAITDIAGGYVAWTENELPVEE.

The transit peptide at 1–65 (METTAFNTTS…TTSRGNVAAE (65 aa)) directs the protein to the chloroplast. In terms of domain architecture, Rhodanese spans 82–182 (AQAGYRYLDV…WTENELPVEE (101 aa)). C142 functions as the Cysteine persulfide intermediate in the catalytic mechanism.

Its subcellular location is the plastid. It is found in the chloroplast. The protein localises to the thylakoid. This Arabidopsis thaliana (Mouse-ear cress) protein is Rhodanese-like domain-containing protein 15, chloroplastic (STR15).